The chain runs to 281 residues: Elongation factor 1-delta (281 aa).

A2 is subject to N-acetylalanine. K17 bears the N6-acetyllysine mark. A phosphoserine mark is found at S37, S44, S60, S86, and S106. Positions 80–115 are leucine-zipper; the sequence is LIVRIASLEVENQNLRGVVQDLQQAISKLEVRLSTL. At K107 the chain carries N6-acetyllysine. The span at 115–132 shows a compositional bias: polar residues; sequence LEKSSPTHRATAPQTQHV. The interval 115 to 172 is disordered; sequence LEKSSPTHRATAPQTQHVSPMRQVEPPAKKGATPAEDDEDNDIDLFGSDEEEEDKEAA. At K117 the chain carries N6-acetyllysine; alternate. An N6-succinyllysine; alternate modification is found at K117. S119 carries the post-translational modification Phosphoserine. T129 carries the phosphothreonine modification. S133 carries the phosphoserine modification. T147 is modified (phosphothreonine). Over residues 149-169 the composition is skewed to acidic residues; it reads AEDDEDNDIDLFGSDEEEEDK. S162 bears the Phosphoserine; by CK2 mark. A catalytic (GEF) region spans residues 173-281; the sequence is RLREERLRQY…SVDIAAFNKI (109 aa).

The protein belongs to the EF-1-beta/EF-1-delta family. As to quaternary structure, EF-1 is composed of 4 subunits: alpha, beta, delta isoform 1, and gamma. Isoform 2 interacts with HSF1 and NFE2L2.

The protein resides in the nucleus. In terms of biological role, EF-1-beta and EF-1-delta stimulate the exchange of GDP bound to EF-1-alpha to GTP, regenerating EF-1-alpha for another round of transfer of aminoacyl-tRNAs to the ribosome. Functionally, regulates induction of heat-shock-responsive genes through association with heat shock transcription factors and direct DNA-binding at heat shock promoter elements (HSE). This Rattus norvegicus (Rat) protein is Elongation factor 1-delta (Eef1d).